A 448-amino-acid polypeptide reads, in one-letter code: Phosphoglucosamine mutase (448 aa).

Ser100 serves as the catalytic Phosphoserine intermediate. Mg(2+)-binding residues include Ser100, Asp240, Asp242, and Asp244. Ser100 bears the Phosphoserine mark.

The protein belongs to the phosphohexose mutase family. Mg(2+) serves as cofactor. In terms of processing, activated by phosphorylation.

It carries out the reaction alpha-D-glucosamine 1-phosphate = D-glucosamine 6-phosphate. Its function is as follows. Catalyzes the conversion of glucosamine-6-phosphate to glucosamine-1-phosphate. The sequence is that of Phosphoglucosamine mutase from Bacillus licheniformis (strain ATCC 14580 / DSM 13 / JCM 2505 / CCUG 7422 / NBRC 12200 / NCIMB 9375 / NCTC 10341 / NRRL NRS-1264 / Gibson 46).